The primary structure comprises 156 residues: ATP synthase subunit b (156 aa).

The chain crosses the membrane as a helical span at residues 12–32 (VAFLIFVLFCMKYVWPPVITA).

The protein belongs to the ATPase B chain family. As to quaternary structure, F-type ATPases have 2 components, F(1) - the catalytic core - and F(0) - the membrane proton channel. F(1) has five subunits: alpha(3), beta(3), gamma(1), delta(1), epsilon(1). F(0) has three main subunits: a(1), b(2) and c(10-14). The alpha and beta chains form an alternating ring which encloses part of the gamma chain. F(1) is attached to F(0) by a central stalk formed by the gamma and epsilon chains, while a peripheral stalk is formed by the delta and b chains.

The protein resides in the cell inner membrane. Its function is as follows. F(1)F(0) ATP synthase produces ATP from ADP in the presence of a proton or sodium gradient. F-type ATPases consist of two structural domains, F(1) containing the extramembraneous catalytic core and F(0) containing the membrane proton channel, linked together by a central stalk and a peripheral stalk. During catalysis, ATP synthesis in the catalytic domain of F(1) is coupled via a rotary mechanism of the central stalk subunits to proton translocation. Functionally, component of the F(0) channel, it forms part of the peripheral stalk, linking F(1) to F(0). The protein is ATP synthase subunit b of Pseudomonas putida (strain ATCC 700007 / DSM 6899 / JCM 31910 / BCRC 17059 / LMG 24140 / F1).